Reading from the N-terminus, the 315-residue chain is Glutamyl-Q tRNA(Asp) synthetase (315 aa).

L-glutamate contacts are provided by residues Arg-12–Ser-16 and Glu-48. Residues Pro-15–Ser-25 carry the 'HIGH' region motif. Residues Cys-104, Cys-106, Tyr-124, and Cys-128 each coordinate Zn(2+). Tyr-181 and Arg-199 together coordinate L-glutamate. The short motif at Lys-237–Gln-241 is the 'KMSKS' region element. Lys-240 is a binding site for ATP.

This sequence belongs to the class-I aminoacyl-tRNA synthetase family. GluQ subfamily. Zn(2+) is required as a cofactor.

Catalyzes the tRNA-independent activation of glutamate in presence of ATP and the subsequent transfer of glutamate onto a tRNA(Asp). Glutamate is transferred on the 2-amino-5-(4,5-dihydroxy-2-cyclopenten-1-yl) moiety of the queuosine in the wobble position of the QUC anticodon. This chain is Glutamyl-Q tRNA(Asp) synthetase, found in Aromatoleum aromaticum (strain DSM 19018 / LMG 30748 / EbN1) (Azoarcus sp. (strain EbN1)).